The chain runs to 267 residues: Hydroxyacylglutathione hydrolase (267 aa).

Residues His-55, His-57, Asp-59, His-60, His-121, Asp-138, and His-176 each coordinate Zn(2+).

This sequence belongs to the metallo-beta-lactamase superfamily. Glyoxalase II family. In terms of assembly, monomer. Requires Zn(2+) as cofactor.

The catalysed reaction is an S-(2-hydroxyacyl)glutathione + H2O = a 2-hydroxy carboxylate + glutathione + H(+). It functions in the pathway secondary metabolite metabolism; methylglyoxal degradation; (R)-lactate from methylglyoxal: step 2/2. In terms of biological role, thiolesterase that catalyzes the hydrolysis of S-D-lactoyl-glutathione to form glutathione and D-lactic acid. This Shewanella oneidensis (strain ATCC 700550 / JCM 31522 / CIP 106686 / LMG 19005 / NCIMB 14063 / MR-1) protein is Hydroxyacylglutathione hydrolase.